The chain runs to 477 residues: Ribulose bisphosphate carboxylase large chain (477 aa).

Residues 1–2 constitute a propeptide that is removed on maturation; sequence MS. Proline 3 carries the post-translational modification N-acetylproline. Lysine 14 is subject to N6,N6,N6-trimethyllysine. Substrate contacts are provided by asparagine 123 and threonine 173. Catalysis depends on lysine 175, which acts as the Proton acceptor. Residue lysine 177 participates in substrate binding. The Mg(2+) site is built by lysine 201, aspartate 203, and glutamate 204. An N6-carboxylysine modification is found at lysine 201. Histidine 294 functions as the Proton acceptor in the catalytic mechanism. Residues arginine 295, histidine 327, and serine 379 each contribute to the substrate site.

The protein belongs to the RuBisCO large chain family. Type I subfamily. Heterohexadecamer of 8 large chains and 8 small chains; disulfide-linked. The disulfide link is formed within the large subunit homodimers. Mg(2+) is required as a cofactor. In terms of processing, the disulfide bond which can form in the large chain dimeric partners within the hexadecamer appears to be associated with oxidative stress and protein turnover.

It is found in the plastid. Its subcellular location is the chloroplast. The enzyme catalyses 2 (2R)-3-phosphoglycerate + 2 H(+) = D-ribulose 1,5-bisphosphate + CO2 + H2O. The catalysed reaction is D-ribulose 1,5-bisphosphate + O2 = 2-phosphoglycolate + (2R)-3-phosphoglycerate + 2 H(+). Its function is as follows. RuBisCO catalyzes two reactions: the carboxylation of D-ribulose 1,5-bisphosphate, the primary event in carbon dioxide fixation, as well as the oxidative fragmentation of the pentose substrate in the photorespiration process. Both reactions occur simultaneously and in competition at the same active site. This chain is Ribulose bisphosphate carboxylase large chain, found in Digitalis purpurea (Common foxglove).